A 190-amino-acid chain; its full sequence is uncharacterized protein (190 aa).

4 consecutive transmembrane segments (helical) span residues 15 to 35, 58 to 78, 94 to 114, and 148 to 168; these read LVMS…VLAI, FSSF…GVLI, FFSA…YFAF, and FLFF…SFFV.

It is found in the membrane. This is an uncharacterized protein from Saccharomyces cerevisiae (strain ATCC 204508 / S288c) (Baker's yeast).